Consider the following 384-residue polypeptide: L-cysteine:1D-myo-inositol 2-amino-2-deoxy-alpha-D-glucopyranoside ligase (384 aa).

Residue Cys16 coordinates Zn(2+). Residues 16-19 (CGIT), Thr31, and 54-56 (NVT) contribute to the L-cysteinyl-5'-AMP site. The 'HIGH' region signature appears at 18–28 (ITPYDATHLGH). The 'ERGGDP' region signature appears at 159–164 (ERGGDP). Trp199 is a binding site for L-cysteinyl-5'-AMP. Residue Cys203 participates in Zn(2+) binding. 221–223 (GSD) provides a ligand contact to L-cysteinyl-5'-AMP. Residue His228 coordinates Zn(2+). Ile255 is an L-cysteinyl-5'-AMP binding site. A 'KMSKS' region motif is present at residues 261–265 (KMSKS).

This sequence belongs to the class-I aminoacyl-tRNA synthetase family. MshC subfamily. Monomer. Zn(2+) serves as cofactor.

The enzyme catalyses 1D-myo-inositol 2-amino-2-deoxy-alpha-D-glucopyranoside + L-cysteine + ATP = 1D-myo-inositol 2-(L-cysteinylamino)-2-deoxy-alpha-D-glucopyranoside + AMP + diphosphate + H(+). Its function is as follows. Catalyzes the ATP-dependent condensation of GlcN-Ins and L-cysteine to form L-Cys-GlcN-Ins. This chain is L-cysteine:1D-myo-inositol 2-amino-2-deoxy-alpha-D-glucopyranoside ligase, found in Mycobacterium avium (strain 104).